We begin with the raw amino-acid sequence, 309 residues long: tRNA uridine(34) hydroxylase (309 aa).

Residues 129–223 enclose the Rhodanese domain; sequence SEPGTIVIDT…YLEEVPAEQS (95 aa). Residue Cys183 is the Cysteine persulfide intermediate of the active site. The interval 288-309 is disordered; sequence YAERQRQVELAQARGKRPHIGS.

Belongs to the TrhO family.

It carries out the reaction uridine(34) in tRNA + AH2 + O2 = 5-hydroxyuridine(34) in tRNA + A + H2O. Catalyzes oxygen-dependent 5-hydroxyuridine (ho5U) modification at position 34 in tRNAs. The chain is tRNA uridine(34) hydroxylase from Mesorhizobium japonicum (strain LMG 29417 / CECT 9101 / MAFF 303099) (Mesorhizobium loti (strain MAFF 303099)).